A 397-amino-acid chain; its full sequence is MALETKPAKDPAAEDKHELDPKRKAALDTALAQVEKSFGKGSAMRLGDQPEQNVEVIPTGSLALDMALGIGGLPKGRIVEIYGPESSGKTTLALHVVANAQKKGGVAAYIDAEHALDPAYARKLGVDTDSLIVSQPDNGEQALEIADMLIRSGALDVIVIDSVAALVPKAEIEGEMGDSHVGLQARLMSQALRKMTGALAQAGTTAIFINQLREKIGVFFGNPETTTGGKALKFYASVRLDIRRIQTLKNGDEAVGNRTRVKVVKNKMAPPFKSAEFDMLYGEGISREGSVIDMAQQVGVVKKSGSWFTYEGDQLGQGREKVRQFLKDNPAITEEIENKVKAEFGLIGSADQFAEDGEAAAAAAVSEAAAADVAKDSKAAAAPAAKTTRAKAGTAKA.

Residues 1–23 (MALETKPAKDPAAEDKHELDPKR) form a disordered region. Residue 83-90 (GPESSGKT) participates in ATP binding.

This sequence belongs to the RecA family.

The protein localises to the cytoplasm. Functionally, can catalyze the hydrolysis of ATP in the presence of single-stranded DNA, the ATP-dependent uptake of single-stranded DNA by duplex DNA, and the ATP-dependent hybridization of homologous single-stranded DNAs. It interacts with LexA causing its activation and leading to its autocatalytic cleavage. In Bifidobacterium longum (strain NCC 2705), this protein is Protein RecA.